Reading from the N-terminus, the 835-residue chain is Protein translocase subunit SecA (835 aa).

Residues Q85, 103-107, and D492 each bind ATP; that span reads GEGKT. C819, C821, C830, and C831 together coordinate Zn(2+).

Belongs to the SecA family. In terms of assembly, monomer and homodimer. Part of the essential Sec protein translocation apparatus which comprises SecA, SecYEG and auxiliary proteins SecDF. Other proteins may also be involved. Requires Zn(2+) as cofactor.

The protein localises to the cell membrane. The protein resides in the cytoplasm. The enzyme catalyses ATP + H2O + cellular proteinSide 1 = ADP + phosphate + cellular proteinSide 2.. Functionally, part of the Sec protein translocase complex. Interacts with the SecYEG preprotein conducting channel. Has a central role in coupling the hydrolysis of ATP to the transfer of proteins into and across the cell membrane, serving as an ATP-driven molecular motor driving the stepwise translocation of polypeptide chains across the membrane. The protein is Protein translocase subunit SecA of Clostridium botulinum (strain Okra / Type B1).